The sequence spans 375 residues: Probable butyrate kinase 2 (375 aa).

This sequence belongs to the acetokinase family.

Its subcellular location is the cytoplasm. The catalysed reaction is butanoate + ATP = butanoyl phosphate + ADP. The chain is Probable butyrate kinase 2 from Thermotoga maritima (strain ATCC 43589 / DSM 3109 / JCM 10099 / NBRC 100826 / MSB8).